The sequence spans 525 residues: 2-isopropylmalate synthase (525 aa).

The Pyruvate carboxyltransferase domain occupies 12–274 (VVIFDTTLRD…WNKIDTTQLT (263 aa)). Residues Asp-21, His-209, His-211, and Asn-245 each coordinate Mn(2+). Residues 398 to 525 (KLLSLSVIAG…GHGASAAAAS (128 aa)) are regulatory domain.

This sequence belongs to the alpha-IPM synthase/homocitrate synthase family. LeuA type 1 subfamily. In terms of assembly, homodimer. Mn(2+) is required as a cofactor.

It is found in the cytoplasm. The enzyme catalyses 3-methyl-2-oxobutanoate + acetyl-CoA + H2O = (2S)-2-isopropylmalate + CoA + H(+). The protein operates within amino-acid biosynthesis; L-leucine biosynthesis; L-leucine from 3-methyl-2-oxobutanoate: step 1/4. Catalyzes the condensation of the acetyl group of acetyl-CoA with 3-methyl-2-oxobutanoate (2-ketoisovalerate) to form 3-carboxy-3-hydroxy-4-methylpentanoate (2-isopropylmalate). This chain is 2-isopropylmalate synthase, found in Bradyrhizobium sp. (strain ORS 278).